Consider the following 218-residue polypeptide: Large ribosomal subunit protein bL25 (218 aa).

The segment at 187 to 218 is disordered; sequence SATAAVEEAKEDGAPEESAQGQGAAEAQETGK. Residues 202–218 are compositionally biased toward low complexity; it reads EESAQGQGAAEAQETGK.

It belongs to the bacterial ribosomal protein bL25 family. CTC subfamily. As to quaternary structure, part of the 50S ribosomal subunit; part of the 5S rRNA/L5/L18/L25 subcomplex. Contacts the 5S rRNA. Binds to the 5S rRNA independently of L5 and L18.

In terms of biological role, this is one of the proteins that binds to the 5S RNA in the ribosome where it forms part of the central protuberance. The polypeptide is Large ribosomal subunit protein bL25 (Anaplasma marginale (strain Florida)).